Here is a 425-residue protein sequence, read N- to C-terminus: Nicotinate dehydrogenase large molybdopterin subunit (425 aa).

Se-Mo-molybdopterin cytosine dinucleotide is bound by residues Gln208 and 238–240 (GFG).

Belongs to the xanthine dehydrogenase family. Heterooctamer of NDHM, NDHL, NDHS and NDHF. Dimer of heterotetramers. The cofactor is Se-Mo-molybdopterin cytosine dinucleotide.

The catalysed reaction is nicotinate + NADP(+) + H2O = 6-hydroxynicotinate + NADPH + H(+). It functions in the pathway cofactor degradation; nicotinate degradation; 6-hydroxynicotinate from nicotinate: step 1/1. With respect to regulation, reversibly inactivated by selenide and sulfide. Not inhibited by cyanide. Its function is as follows. Catalyzes the hydroxylation of nicotinate to 6-hydroxynicotinate. Also active against 2-pyrazinecarboxylic acid, but inactive against other nicotinate analogs. The protein is Nicotinate dehydrogenase large molybdopterin subunit (ndhL) of Eubacterium barkeri (Clostridium barkeri).